Here is a 157-residue protein sequence, read N- to C-terminus: Endoribonuclease YbeY (157 aa).

Histidine 116, histidine 120, and histidine 126 together coordinate Zn(2+).

Belongs to the endoribonuclease YbeY family. Requires Zn(2+) as cofactor.

It localises to the cytoplasm. Functionally, single strand-specific metallo-endoribonuclease involved in late-stage 70S ribosome quality control and in maturation of the 3' terminus of the 16S rRNA. The sequence is that of Endoribonuclease YbeY from Blochmanniella pennsylvanica (strain BPEN).